Consider the following 448-residue polypeptide: MATLDGINVKDIVKVERTSVHSHITGLGLNDRLEAEYVSGGMVGQVAARQAAGLIVKMIQEGKIAGRALLVTGEPGAGKTAIAIAISKELGEDTPFVSIVASEIYSNEINKTEALTQAFRRALGIQIKEETEVLEGEVISLEVDRSANGMGPKVGKLTMRTTDMETIYDLGSKMVDACLKEKVMPGDVIQVDKASGRVTRLGRSFNRSHDYDAMGPKVKLVQCPDGEIQKRRETVHTVCLHDIDVINSRTQGYVALFSGDTGEIKAEVRDQINKKVLEWREEGKAKFVPGVLFIDEAHMLDIECFSFLNRAIEGELSPLIIMATNRLIEKVRGTDVESAHGIPSDFLDRMLIINAIPYTKEDTAKILSIRCDEEGVKLQPTALDLLVKLQEATSLRYCIHLIAASEVIRIRSKAEIVTTDHIGSAYRLFFDTKRSEKILTEESAGFLQ.

G73–T80 is an ATP binding site.

It belongs to the RuvB family. As to quaternary structure, forms homohexameric rings. May form a dodecamer with ruvb-1 made of two stacked hexameric rings. As to expression, expressed in gonadal cells.

It localises to the cytoplasm. The protein resides in the nucleus. The catalysed reaction is ATP + H2O = ADP + phosphate + H(+). Possesses single-stranded DNA-stimulated ATPase and ATP-dependent DNA helicase (5' to 3') activity suggesting a role in nuclear processes such as recombination and transcription. May participate in several chromatin remodeling complexes that mediate the ATP-dependent exchange of histones and remodel chromatin by shifting nucleosomes. Involvement in these complexes is likely required for transcriptional activation of selected genes and DNA repair in response to DNA damage. Has a role in gonadal development. Involved in the endoplasmic reticulum (ER)-associated degradation (ERAD) pathway where it negatively regulates expression of ER stress response genes. Specifically, negatively controls the expression of ER homeostasis regulator ckb-2 in a cdc-48.1/2-dependent manner. The sequence is that of RuvB-like 2 from Caenorhabditis elegans.